A 186-amino-acid chain; its full sequence is Peptidyl-tRNA hydrolase (186 aa).

Tyr17 lines the tRNA pocket. His22 acts as the Proton acceptor in catalysis. The tRNA site is built by Tyr64 and Asn66.

It belongs to the PTH family. As to quaternary structure, monomer.

It is found in the cytoplasm. It catalyses the reaction an N-acyl-L-alpha-aminoacyl-tRNA + H2O = an N-acyl-L-amino acid + a tRNA + H(+). Its function is as follows. Hydrolyzes ribosome-free peptidyl-tRNAs (with 1 or more amino acids incorporated), which drop off the ribosome during protein synthesis, or as a result of ribosome stalling. Catalyzes the release of premature peptidyl moieties from peptidyl-tRNA molecules trapped in stalled 50S ribosomal subunits, and thus maintains levels of free tRNAs and 50S ribosomes. This chain is Peptidyl-tRNA hydrolase, found in Methylacidiphilum infernorum (isolate V4) (Methylokorus infernorum (strain V4)).